The chain runs to 1123 residues: Telomerase reverse transcriptase (1123 aa).

Disordered stretches follow at residues 191-242 and 410-439; these read ENKR…KTTK and GTTS…PKCP. The span at 201-210 shows a compositional bias: polar residues; the sequence is QPPTKRQWLS. In terms of domain architecture, Reverse transcriptase spans 596 to 929; that stretch reads LVDDAEAESS…PFVRWTGLLI (334 aa). Mg(2+) is bound by residues Asp691, Asp860, and Asp861.

This sequence belongs to the reverse transcriptase family. Telomerase subfamily. Component of the telomerase ribonucleoprotein complex. Interacts with POT1A.

The protein localises to the nucleus. It localises to the chromosome. Its subcellular location is the telomere. The enzyme catalyses DNA(n) + a 2'-deoxyribonucleoside 5'-triphosphate = DNA(n+1) + diphosphate. In terms of biological role, telomerase is a ribonucleoprotein enzyme essential for the replication of chromosome termini in most eukaryotes. It elongates telomeres. It is a reverse transcriptase that adds simple sequence repeats to chromosome ends by copying a template sequence within the RNA component of the enzyme. Required to prevent genome instability induced by breakage-fusion-bridge (BFB) cycles. Can extend completely non-telomeric sequences using RNA template in vitro. This chain is Telomerase reverse transcriptase (TERT), found in Arabidopsis thaliana (Mouse-ear cress).